The sequence spans 231 residues: WAP four-disulfide core domain protein 3 (231 aa).

A signal peptide spans 1-24 (MMLSCLFLLKALLALGSLESWITA). WAP domains follow at residues 26-68 (EHAK…CRDI), 69-114 (PKGR…VVPI), 119-162 (LAEF…LGDI), and 163-207 (EGGR…VPPV). Cystine bridges form between cysteine 33–cysteine 57, cysteine 40–cysteine 61, cysteine 44–cysteine 56, cysteine 50–cysteine 65, cysteine 76–cysteine 102, cysteine 85–cysteine 106, cysteine 89–cysteine 101, cysteine 95–cysteine 110, cysteine 126–cysteine 150, cysteine 133–cysteine 154, cysteine 137–cysteine 149, cysteine 143–cysteine 158, cysteine 170–cysteine 195, cysteine 178–cysteine 199, cysteine 182–cysteine 194, and cysteine 188–cysteine 203. N-linked (GlcNAc...) asparagine glycosylation occurs at asparagine 107. Residue asparagine 217 is glycosylated (N-linked (GlcNAc...) asparagine).

Ubiquitously expressed.

It is found in the secreted. The polypeptide is WAP four-disulfide core domain protein 3 (WFDC3) (Homo sapiens (Human)).